Consider the following 653-residue polypeptide: Extracellular metalloproteinase (653 aa).

The signal sequence occupies residues Met1 to Gly19. Residues His20 to Asp244 constitute a propeptide that is removed on maturation. N-linked (GlcNAc...) asparagine glycans are attached at residues Asn327, Asn336, and Asn412. A Zn(2+)-binding site is contributed by His429. The active site involves Glu430. Residue His433 participates in Zn(2+) binding. Residues Asn636 and Asn637 are each glycosylated (N-linked (GlcNAc...) asparagine).

This sequence belongs to the peptidase M36 family. Requires Zn(2+) as cofactor.

The protein localises to the secreted. Functionally, secreted metalloproteinase that allows assimilation of proteinaceous substrates. The chain is Extracellular metalloproteinase (MEP) from Pyrenophora tritici-repentis (strain Pt-1C-BFP) (Wheat tan spot fungus).